Consider the following 100-residue polypeptide: Urease subunit gamma (100 aa).

Belongs to the urease gamma subunit family. Heterotrimer of UreA (gamma), UreB (beta) and UreC (alpha) subunits. Three heterotrimers associate to form the active enzyme.

It localises to the cytoplasm. It carries out the reaction urea + 2 H2O + H(+) = hydrogencarbonate + 2 NH4(+). The protein operates within nitrogen metabolism; urea degradation; CO(2) and NH(3) from urea (urease route): step 1/1. This Prochlorococcus marinus (strain MIT 9313) protein is Urease subunit gamma.